The sequence spans 482 residues: MSAIRPAAVVVLAAGEGTRMKSATPKVLHDICGRSLVGHVLAAARELEPENLVVVVGHAREQVTAHLAEIDPAVRTAVQAEQNGTGHAVRMGLEELGGVVDGTVVVVCGDTPLLSGETLRQLAATHTADGNAVTVLTAEVPDATGYGRIVRDGASGAVTAIVEHKDASESQRAVREINSGVFAFDGRLLADALGKVRTDNSQGEEYLTDVLGILREAGHRVGASVAADHREIAGINNRVQLAEARRILNDRLLTRAMLAGVTVVDPATTWIDVTVTFGQDAIVHPGTQLQGTTQLGEGAEVGPNSRLKDTRVGAGARIDNTVAERADVGAQASVGPFAYLRPGTRLGAKAKVGTYVETKNASIGEGTKVPHLSYVGDATIGEYSNIGAASVFVNYDGQDKHHTTVGSHCRTGSDNMFVAPVTVGDGAYTAAGSVITKDVPPGSLAVARGQQRNIEGWVARKRPGSAAAKAAEVASRKPEGED.

Residues 1–238 are pyrophosphorylase; that stretch reads MSAIRPAAVV…HREIAGINNR (238 aa). UDP-N-acetyl-alpha-D-glucosamine is bound by residues 12–15, lysine 26, glutamine 79, and 84–85; these read LAAG and GT. Aspartate 110 lines the Mg(2+) pocket. The UDP-N-acetyl-alpha-D-glucosamine site is built by glycine 147, glutamate 163, asparagine 178, and asparagine 236. Asparagine 236 is a binding site for Mg(2+). The interval 239 to 259 is linker; the sequence is VQLAEARRILNDRLLTRAMLA. The N-acetyltransferase stretch occupies residues 260–482; it reads GVTVVDPATT…VASRKPEGED (223 aa). UDP-N-acetyl-alpha-D-glucosamine is bound by residues arginine 341 and lysine 359. Histidine 371 functions as the Proton acceptor in the catalytic mechanism. The UDP-N-acetyl-alpha-D-glucosamine site is built by tyrosine 374 and asparagine 385. Acetyl-CoA-binding positions include alanine 388, 394-395, serine 413, alanine 431, and arginine 448; that span reads NY.

In the N-terminal section; belongs to the N-acetylglucosamine-1-phosphate uridyltransferase family. It in the C-terminal section; belongs to the transferase hexapeptide repeat family. Homotrimer. The cofactor is Mg(2+).

It localises to the cytoplasm. It catalyses the reaction alpha-D-glucosamine 1-phosphate + acetyl-CoA = N-acetyl-alpha-D-glucosamine 1-phosphate + CoA + H(+). The catalysed reaction is N-acetyl-alpha-D-glucosamine 1-phosphate + UTP + H(+) = UDP-N-acetyl-alpha-D-glucosamine + diphosphate. Its pathway is nucleotide-sugar biosynthesis; UDP-N-acetyl-alpha-D-glucosamine biosynthesis; N-acetyl-alpha-D-glucosamine 1-phosphate from alpha-D-glucosamine 6-phosphate (route II): step 2/2. It participates in nucleotide-sugar biosynthesis; UDP-N-acetyl-alpha-D-glucosamine biosynthesis; UDP-N-acetyl-alpha-D-glucosamine from N-acetyl-alpha-D-glucosamine 1-phosphate: step 1/1. The protein operates within bacterial outer membrane biogenesis; LPS lipid A biosynthesis. In terms of biological role, catalyzes the last two sequential reactions in the de novo biosynthetic pathway for UDP-N-acetylglucosamine (UDP-GlcNAc). The C-terminal domain catalyzes the transfer of acetyl group from acetyl coenzyme A to glucosamine-1-phosphate (GlcN-1-P) to produce N-acetylglucosamine-1-phosphate (GlcNAc-1-P), which is converted into UDP-GlcNAc by the transfer of uridine 5-monophosphate (from uridine 5-triphosphate), a reaction catalyzed by the N-terminal domain. In Streptomyces avermitilis (strain ATCC 31267 / DSM 46492 / JCM 5070 / NBRC 14893 / NCIMB 12804 / NRRL 8165 / MA-4680), this protein is Bifunctional protein GlmU.